We begin with the raw amino-acid sequence, 399 residues long: Forkhead box protein Q1 (399 aa).

A disordered region spans residues 1 to 112; the sequence is MKLEVFAPRA…EGARSKPYTR (112 aa). The span at 32-54 shows a compositional bias: low complexity; it reads LSAAGDDSLGSDGDCAANSPAAG. Residues 55–66 show a composition bias toward gly residues; it reads SGAGDLEGGGGE. Positions 114 to 205 form a DNA-binding region, fork-head; sequence PKPPYSYIAL…SEYTFADGVF (92 aa). The segment at 211–263 is disordered; it reads RLSHRTTVSASGYGGGSPPGPAGTPQPAPTAGSSPIARSPARQEEGSSPASKF. Residues 228–238 are compositionally biased toward pro residues; it reads PPGPAGTPQPA.

It localises to the nucleus. Plays a role in hair follicle differentiation. The protein is Forkhead box protein Q1 (Foxq1) of Rattus norvegicus (Rat).